A 210-amino-acid chain; its full sequence is ATP-dependent Clp protease proteolytic subunit (210 aa).

The active-site Nucleophile is S106. H131 is a catalytic residue.

Belongs to the peptidase S14 family. Fourteen ClpP subunits assemble into 2 heptameric rings which stack back to back to give a disk-like structure with a central cavity, resembling the structure of eukaryotic proteasomes.

Its subcellular location is the cytoplasm. It catalyses the reaction Hydrolysis of proteins to small peptides in the presence of ATP and magnesium. alpha-casein is the usual test substrate. In the absence of ATP, only oligopeptides shorter than five residues are hydrolyzed (such as succinyl-Leu-Tyr-|-NHMec, and Leu-Tyr-Leu-|-Tyr-Trp, in which cleavage of the -Tyr-|-Leu- and -Tyr-|-Trp bonds also occurs).. Cleaves peptides in various proteins in a process that requires ATP hydrolysis. Has a chymotrypsin-like activity. Plays a major role in the degradation of misfolded proteins. The protein is ATP-dependent Clp protease proteolytic subunit of Azospirillum brasilense.